Reading from the N-terminus, the 919-residue chain is GPI ethanolamine phosphate transferase 1 (919 aa).

Residues 1–9 (MWNKTRTTL) are Cytoplasmic-facing. The helical transmembrane segment at 10-30 (LAVGVLFHLFYLWSIFDIYFI) threads the bilayer. Residues 31 to 457 (SPLVHGMSPY…TTYNWRFIRT (427 aa)) lie on the Lumenal side of the membrane. Residues Asn90, Asn138, Asn198, Asn202, Asn286, and Asn312 are each glycosylated (N-linked (GlcNAc...) asparagine). Residues 458–478 (IVTFGFVGWIFFSFIIFLKSF) form a helical membrane-spanning segment. At 479-488 (ILENVIDDQK) the chain is on the cytoplasmic side. The helical transmembrane segment at 489–509 (ASPLSHAVFGSIGILLNWILF) threads the bilayer. Topologically, residues 510 to 512 (YQH) are lumenal. The chain crosses the membrane as a helical span at residues 513–533 (SPFNFYMYLLFPLYFWSYIFT). Residues 534-553 (NRSVLRSGIKEFFKGTSPWK) lie on the Cytoplasmic side of the membrane. Residues 554–574 (RVLITISIISVYEGIVYGFFH) form a helical membrane-spanning segment. At 575 to 576 (RW) the chain is on the lumenal side. The chain crosses the membrane as a helical span at residues 577-597 (TFTLITNILAFYPFICGVREL). Ser598 is a topological domain (cytoplasmic). Residues 599–619 (VNILWIITSVLLSTFTLFDAV) traverse the membrane as a helical segment. The Lumenal portion of the chain corresponds to 620 to 626 (KIEDLNQ). A helical membrane pass occupies residues 627–647 (IHLAGLLIILSAFYALYKIHS). Over 648 to 655 (RINSYTRA) the chain is Cytoplasmic. The helical transmembrane segment at 656–676 (IFAIQISLVAAMLAVTHRSVI) threads the bilayer. Residues 677–687 (SLQLRQGLPRE) lie on the Lumenal side of the membrane. A helical transmembrane segment spans residues 688–708 (SQVAGWIIFFVSLFVMPILHY). Residues 709-720 (RKPNNDYKVRLL) are Cytoplasmic-facing. The chain crosses the membrane as a helical span at residues 721–741 (IIYLTFAPSFIILTISFESLF). The Lumenal portion of the chain corresponds to 742–776 (YFLFTSYMVQWIEIENKIKEMKTQKDENWLQVLRV). The helical transmembrane segment at 777-797 (SVIGFFLLQVAFFGTGNVASI) threads the bilayer. At 798-807 (SSFSLESVCR) the chain is on the cytoplasmic side. A helical membrane pass occupies residues 808–828 (LLPIFDPFLMGALLMLKLIIP). The Lumenal portion of the chain corresponds to 829-848 (YGLLSTCLGILNLKLNFKDY). The helical transmembrane segment at 849-869 (TISSLIISMSDILSLNFFYLL) threads the bilayer. Over 870–885 (RTEGSWLDIGITISNY) the chain is Cytoplasmic. A helical membrane pass occupies residues 886-906 (CLAILSSLFMLILEVLGHVLL). Over 907 to 919 (KNVIIQDKTKKTQ) the chain is Lumenal.

The protein belongs to the PIGG/PIGN/PIGO family. PIGN subfamily. In terms of assembly, interacts with CSF1; CSF1 channels phosphatidylethanolamine to MCD4 in the endoplasmic reticulum at contact sites to support GPI anchor biosynthesis. N-glycosylated.

The protein localises to the endoplasmic reticulum membrane. Its subcellular location is the golgi apparatus membrane. It is found in the vacuole membrane. It participates in glycolipid biosynthesis; glycosylphosphatidylinositol-anchor biosynthesis. In terms of biological role, ethanolamine phosphate transferase involved in glycosylphosphatidylinositol-anchor biosynthesis. Transfers ethanolamine phosphate to the first alpha-1,4-linked mannose of the glycosylphosphatidylinositol precursor of GPI-anchor. Ethanolamine phosphate on the alpha-1,4-linked mannose is essential for further mannosylation by GPI10 and is necessary for an efficient recognition of GPI lipids and GPI proteins by the GPI transamidase, for the efficient transport of GPI anchored proteins from endoplasmic reticulum to Golgi and for the physiological incorporation of ceramides into GPI anchors by lipid remodeling. Also involved in non-mitochondrial ATP movements across membrane and participates in Golgi and endoplasmic reticulum function, Also required for the incorporation of BGL2 into the cell wall. The protein is GPI ethanolamine phosphate transferase 1 (MCD4) of Saccharomyces cerevisiae (strain ATCC 204508 / S288c) (Baker's yeast).